The primary structure comprises 512 residues: Glycine betaine transporter OpuD (512 aa).

The next 12 membrane-spanning stretches (helical) occupy residues 5-25, 45-65, 82-102, 135-155, 186-206, 222-242, 257-277, 312-332, 343-363, 395-415, 441-461, and 464-484; these read ISSV…WGVI, FGWY…FLIF, FGLL…GLVF, FFHW…CIAY, IDCI…GLGA, AFIV…LSAW, MVLA…VLIM, WTIF…IFIA, FLIG…SIFG, LTMV…ITSA, WGII…LAAL, and TAIL…ASLY.

This sequence belongs to the BCCT transporter (TC 2.A.15) family.

The protein resides in the cell membrane. Its activity is regulated as follows. Activity is stimulated by high osmolarity. High-affinity uptake of glycine betaine. Does not mediate either carnitine or choline uptake. This is Glycine betaine transporter OpuD (opuD) from Bacillus subtilis (strain 168).